Here is a 415-residue protein sequence, read N- to C-terminus: D-galactonate dehydratase family member RspA (415 aa).

Positions 48 and 133 each coordinate substrate. Residue Tyr-170 is the Proton donor/acceptor of the active site. Asp-223 serves as a coordination point for Mg(2+). His-225 acts as the Proton donor/acceptor in catalysis. The Mg(2+) site is built by Glu-249, Asp-250, and Glu-275. Substrate is bound by residues Glu-275, Arg-296, His-325, Asp-329, and Glu-352.

The protein belongs to the mandelate racemase/muconate lactonizing enzyme family. GalD subfamily. Mg(2+) is required as a cofactor.

It catalyses the reaction D-mannonate = 2-dehydro-3-deoxy-D-gluconate + H2O. Functionally, has low D-mannonate dehydratase activity (in vitro), suggesting that this is not a physiological substrate and that it has no significant role in D-mannonate degradation in vivo. Has no detectable activity with a panel of 70 other acid sugars (in vitro). The chain is D-galactonate dehydratase family member RspA (rspA) from Escherichia coli O6:H1 (strain CFT073 / ATCC 700928 / UPEC).